We begin with the raw amino-acid sequence, 293 residues long: DNA-directed RNA polymerase III subunit rpc6 (293 aa).

Belongs to the eukaryotic RPC34/RPC39 RNA polymerase subunit family. In terms of assembly, component of the RNA polymerase III (Pol III) complex.

It localises to the nucleus. DNA-dependent RNA polymerase catalyzes the transcription of DNA into RNA using the four ribonucleoside triphosphates as substrates. Specific peripheric component of RNA polymerase III which synthesizes small RNAs, such as 5S rRNA and tRNAs. May direct RNA Pol III binding to the TFIIIB-DNA complex. The chain is DNA-directed RNA polymerase III subunit rpc6 (polr3f) from Dictyostelium discoideum (Social amoeba).